The sequence spans 140 residues: Protein archease (140 aa).

Ca(2+) contacts are provided by aspartate 11, aspartate 139, and leucine 140.

It belongs to the archease family.

Activates the tRNA-splicing ligase complex by facilitating the enzymatic turnover of catalytic subunit RtcB. Acts by promoting the guanylylation of RtcB, a key intermediate step in tRNA ligation. Can also alter the NTP specificity of RtcB such that ATP, dGTP or ITP is used efficiently. The chain is Protein archease from Methanopyrus kandleri (strain AV19 / DSM 6324 / JCM 9639 / NBRC 100938).